The following is a 595-amino-acid chain: Apolipoprotein N-acyltransferase 2 (595 aa).

The next 5 helical transmembrane spans lie at 30 to 50, 63 to 83, 95 to 115, 167 to 187, and 210 to 230; these read FLAF…FGFF, LFFH…HWII, VVAI…FPIF, AEIT…YTLF, and FITL…FLFK. The 315-residue stretch at 241 to 555 folds into the CN hydrolase domain; the sequence is LNVLIVQPDA…AEALSETIDV (315 aa). Glu-293 functions as the Proton acceptor in the catalytic mechanism. Lys-372 is an active-site residue. Cys-463 functions as the Nucleophile in the catalytic mechanism. The helical transmembrane segment at 569-589 threads the bilayer; that stretch reads LIPWLMLFLTGIYYLNLLIGI.

It belongs to the CN hydrolase family. Apolipoprotein N-acyltransferase subfamily.

Its subcellular location is the cell inner membrane. It catalyses the reaction N-terminal S-1,2-diacyl-sn-glyceryl-L-cysteinyl-[lipoprotein] + a glycerophospholipid = N-acyl-S-1,2-diacyl-sn-glyceryl-L-cysteinyl-[lipoprotein] + a 2-acyl-sn-glycero-3-phospholipid + H(+). It functions in the pathway protein modification; lipoprotein biosynthesis (N-acyl transfer). Catalyzes the phospholipid dependent N-acylation of the N-terminal cysteine of apolipoprotein, the last step in lipoprotein maturation. The chain is Apolipoprotein N-acyltransferase 2 from Leptospira interrogans serogroup Icterohaemorrhagiae serovar copenhageni (strain Fiocruz L1-130).